We begin with the raw amino-acid sequence, 297 residues long: MRIILITGISGSGKSVALNALEDAGYYCVDNLPPRFLPQLASYLAEDGQDRLAVAIDARSSASLDEMPAMIRDLSRAHDVRVLFLNASTQSLIQRFSETRRRHPLSGSTSHDADVGLLNSLAEAIERERELVAGLAEFGHQIDTSNLRANVLRAWVKRFIEQKDSGLVLMFESFGFKRGVPLDADFVFDVRTLPNPYYDHELRPLTGLDKPVIDFLDALPVVHEMIDDIEKFLAKWLPHFRDDNRSYLTVAIGCTGGQHRSVFIAETLAARLAASANVIVRHRDAPVEAGESSKLVA.

Residue 8 to 15 coordinates ATP; it reads GISGSGKS. 57–60 lines the GTP pocket; that stretch reads DARS.

This sequence belongs to the RapZ-like family.

Its function is as follows. Displays ATPase and GTPase activities. The polypeptide is Nucleotide-binding protein Bxeno_A0336 (Paraburkholderia xenovorans (strain LB400)).